We begin with the raw amino-acid sequence, 78 residues long: Conotoxin CaFr179 (78 aa).

A signal peptide spans 1 to 19 (MSGLGIMVLTLLLLVFMEA). Positions 20–44 (SHQDAGEKQATQRDAINVRRRRSLA) are excised as a propeptide. 3 disulfide bridges follow: Cys52–Cys64, Cys56–Cys72, and Cys63–Cys76. A Phenylalanine amide modification is found at Phe77.

Belongs to the conotoxin O3 superfamily. As to expression, expressed by the venom duct.

The protein resides in the secreted. This is Conotoxin CaFr179 from Conus caracteristicus (Characteristic cone).